Here is a 273-residue protein sequence, read N- to C-terminus: ATP synthase subunit a (273 aa).

7 helical membrane passes run 41-61, 101-121, 122-142, 143-163, 183-203, 221-241, and 247-267; these read ILNIDSIFFTLLLGIIFLLIF, LIAPLALTIFIWIFLMNLMDL, LAVDMLPYIAMYILHIPALRV, VPSADINITLSLALGVFILII, PFNHLIFIPLNFILESVSLLS, LVFILIAGLLPWWSQWIISVP, and IIVITLQAFIFMVLTVVYIAM.

The protein belongs to the ATPase A chain family. As to quaternary structure, F-type ATPases have 2 components, CF(1) - the catalytic core - and CF(0) - the membrane proton channel. CF(1) has five subunits: alpha(3), beta(3), gamma(1), delta(1), epsilon(1). CF(0) has three main subunits: a(1), b(2) and c(9-12). The alpha and beta chains form an alternating ring which encloses part of the gamma chain. CF(1) is attached to CF(0) by a central stalk formed by the gamma and epsilon chains, while a peripheral stalk is formed by the delta and b chains.

The protein resides in the cell membrane. In terms of biological role, key component of the proton channel; it plays a direct role in the translocation of protons across the membrane. This Baumannia cicadellinicola subsp. Homalodisca coagulata protein is ATP synthase subunit a.